Consider the following 392-residue polypeptide: Adenosine 3'-phospho 5'-phosphosulfate transporter 2 (392 aa).

Positions 11-35 are disordered; that stretch reads NINGSASGQQAPTSNSPTLTRKSSS. 10 consecutive transmembrane segments (helical) span residues 62-82, 87-107, 136-156, 159-179, 185-205, 212-232, 249-269, 286-306, 314-334, and 338-358; these read CAGV…IFTV, PFGW…GLVE, LVLA…LGYL, PTQV…SILI, GPLD…FTLA, NFNL…AAIG, VVFY…LVTG, FGYG…VLAL, IAAT…FVLF, and FTVQ…LNVY.

Belongs to the nucleotide-sugar transporter family. SLC35B subfamily.

It is found in the golgi apparatus membrane. Its function is as follows. Mediates the transport of adenosine 3'-phospho 5'-phosphosulfate (PAPS), from cytosol into Golgi. PAPS is a universal sulfuryl donor for sulfation events that take place in the Golgi. Essential for viability. Involved in glycosaminoglycan synthesis and the subsequent signaling. May be involved in hh and dpp signaling by controlling the sulfation of heparan sulfate (HS). The sequence is that of Adenosine 3'-phospho 5'-phosphosulfate transporter 2 from Drosophila pseudoobscura pseudoobscura (Fruit fly).